The chain runs to 352 residues: SNF1-related protein kinase regulatory subunit gamma-like PV42a (352 aa).

CBS domains lie at 24 to 106 (RNRR…LSDL), 122 to 196 (LEGL…FDDL), 210 to 281 (VNDS…ELQT), and 297 to 352 (KERE…STLS).

The protein belongs to the 5'-AMP-activated protein kinase gamma subunit family. As to expression, expressed highly in rosette leaves, cauline leaves, open flowers, developing siliques and dry seeds, but at a low level in stems and floral buds.

Plays redundant role with PV42b in regulating male gametogenesis and pollen tube guidance. In Arabidopsis thaliana (Mouse-ear cress), this protein is SNF1-related protein kinase regulatory subunit gamma-like PV42a (PV42A).